Here is a 307-residue protein sequence, read N- to C-terminus: MTDSTYDVTRVRTYLQGLQTRIADALGALDGTPLATDTWQRGPAERLRGGGCTRILEGGRVFERAGIGFSDVAGDALPPSASAARPQLAGRGFEALGVSLVLHPRNPYCPTVHMNVRMLIATKPGEAPVFWFGGGMDLTPVYGFEDDARHFHQTCKDALDPFGAELYPRFKQWCDEYFFLKHRNETRGIGGIFFDDFSEPGFERSFDLMQSVGDAFLHAYLPIVERRAELPYGERERDFQAYRRGRYVEFNLVFDRGTLFGLQSGGRTESILMSMPPVANWRYNWQPEPDSPEARLYSDFLVPRDWV.

Residue serine 99 participates in substrate binding. Positions 103 and 113 each coordinate a divalent metal cation. Histidine 113 (proton donor) is an active-site residue. 115–117 lines the substrate pocket; the sequence is NVR. Positions 152 and 182 each coordinate a divalent metal cation. Positions 247–282 are important for dimerization; it reads YVEFNLVFDRGTLFGLQSGGRTESILMSMPPVANWR. Residue 265-267 coordinates substrate; that stretch reads GGR.

The protein belongs to the aerobic coproporphyrinogen-III oxidase family. Homodimer. It depends on a divalent metal cation as a cofactor.

Its subcellular location is the cytoplasm. The catalysed reaction is coproporphyrinogen III + O2 + 2 H(+) = protoporphyrinogen IX + 2 CO2 + 2 H2O. Its pathway is porphyrin-containing compound metabolism; protoporphyrin-IX biosynthesis; protoporphyrinogen-IX from coproporphyrinogen-III (O2 route): step 1/1. Involved in the heme biosynthesis. Catalyzes the aerobic oxidative decarboxylation of propionate groups of rings A and B of coproporphyrinogen-III to yield the vinyl groups in protoporphyrinogen-IX. The protein is Oxygen-dependent coproporphyrinogen-III oxidase of Burkholderia orbicola (strain MC0-3).